Consider the following 452-residue polypeptide: Putative tripartite motif-containing protein 49B (452 aa).

An RING-type zinc finger spans residues 15–56 (CPICMNYFIDPVTIDCGHSFCRPCFYLNWKDSPFLVQCSECT). The B box-type zinc-finger motif lies at 88-129 (SEEQMCGTHRETKKMFCEVDRSLLCLLCSSSQEHRDHRHCPI). Positions 93, 96, 115, and 121 each coordinate Zn(2+). One can recognise a B30.2/SPRY domain in the interval 269–452 (ELSAGPITGL…LRPIFCCIHF (184 aa)).

Belongs to the TRIM/RBCC family.

In Homo sapiens (Human), this protein is Putative tripartite motif-containing protein 49B (TRIM49B).